A 61-amino-acid polypeptide reads, in one-letter code: Small ribosomal subunit protein uS14 (61 aa).

Zn(2+) contacts are provided by C24, C27, C40, and C43.

This sequence belongs to the universal ribosomal protein uS14 family. Zinc-binding uS14 subfamily. As to quaternary structure, part of the 30S ribosomal subunit. Contacts proteins S3 and S10. Requires Zn(2+) as cofactor.

Binds 16S rRNA, required for the assembly of 30S particles and may also be responsible for determining the conformation of the 16S rRNA at the A site. This chain is Small ribosomal subunit protein uS14, found in Streptococcus thermophilus (strain ATCC BAA-491 / LMD-9).